Consider the following 408-residue polypeptide: Ribulose bisphosphate carboxylase/oxygenase activase, chloroplastic (408 aa).

A chloroplast-targeting transit peptide spans Met1–Val32. ATP is bound at residue Gly138–Thr145.

It belongs to the RuBisCO activase family. Monomer.

Its subcellular location is the plastid. It is found in the chloroplast stroma. Activation of RuBisCO (ribulose-1,5-bisphosphate carboxylase/oxygenase; EC 4.1.1.39) involves the ATP-dependent carboxylation of the epsilon-amino group of lysine leading to a carbamate structure. The protein is Ribulose bisphosphate carboxylase/oxygenase activase, chloroplastic of Chlamydomonas reinhardtii (Chlamydomonas smithii).